We begin with the raw amino-acid sequence, 80 residues long: Small ribosomal subunit protein bS16 (80 aa).

Belongs to the bacterial ribosomal protein bS16 family.

The sequence is that of Small ribosomal subunit protein bS16 from Blochmanniella pennsylvanica (strain BPEN).